The sequence spans 201 residues: LexA repressor (201 aa).

A DNA-binding region (H-T-H motif) is located at residues 28-48; sequence LREIAAKLGISGTLGVMKHLE. Catalysis depends on for autocatalytic cleavage activity residues S120 and K157.

This sequence belongs to the peptidase S24 family. Homodimer.

The enzyme catalyses Hydrolysis of Ala-|-Gly bond in repressor LexA.. Represses a number of genes involved in the response to DNA damage (SOS response), including recA and lexA. In the presence of single-stranded DNA, RecA interacts with LexA causing an autocatalytic cleavage which disrupts the DNA-binding part of LexA, leading to derepression of the SOS regulon and eventually DNA repair. This chain is LexA repressor, found in Geobacter sp. (strain M21).